Reading from the N-terminus, the 309-residue chain is MSYFKTAILLAGLTALFMGVGYLIGGASGAMIALVVAAATNIFAYWNSDKMVLSMYGAQQVDERSAPDLVRMVAGLAGNAQLPMPKVFIMDNPQPNAFATGRNPENAAVAVTTGLMQSLSREELAGVIAHELAHVKNHDTLLMTVTATIAGAVSMLAQFGMFFGGNRDNNNGGLGVIGSIAMMILAPIAAMLVQMAISRSREYAADDLGARICGQPTWLASALAKIENAAHQVPNYDAERAPATAHMFIINPLTGQGMDNLFATHPSTQNRIAALQQLATTLGIRAPQRAAAPARGLWGGAPRSRGPWG.

2 helical membrane-spanning segments follow: residues 7 to 27 (AILL…IGGA) and 28 to 48 (SGAM…YWNS). H130 is a Zn(2+) binding site. E131 is a catalytic residue. H134 serves as a coordination point for Zn(2+). Helical transmembrane passes span 145-165 (VTAT…FFGG) and 173-193 (GLGV…AMLV). Residue E202 coordinates Zn(2+).

Belongs to the peptidase M48B family. Zn(2+) is required as a cofactor.

Its subcellular location is the cell inner membrane. The polypeptide is Protease HtpX homolog (Rhodopseudomonas palustris (strain BisA53)).